The following is a 1024-amino-acid chain: Isoleucine--tRNA ligase (1024 aa).

The 'HIGH' region signature appears at 52 to 62 (PTANGRPHVGH). The 'KMSKS' region signature appears at 590–594 (KMSKS). Lys-593 is an ATP binding site.

Belongs to the class-I aminoacyl-tRNA synthetase family. IleS type 2 subfamily. In terms of assembly, monomer. The cofactor is Zn(2+).

The protein localises to the cytoplasm. It carries out the reaction tRNA(Ile) + L-isoleucine + ATP = L-isoleucyl-tRNA(Ile) + AMP + diphosphate. Catalyzes the attachment of isoleucine to tRNA(Ile). As IleRS can inadvertently accommodate and process structurally similar amino acids such as valine, to avoid such errors it has two additional distinct tRNA(Ile)-dependent editing activities. One activity is designated as 'pretransfer' editing and involves the hydrolysis of activated Val-AMP. The other activity is designated 'posttransfer' editing and involves deacylation of mischarged Val-tRNA(Ile). The chain is Isoleucine--tRNA ligase from Picrophilus torridus (strain ATCC 700027 / DSM 9790 / JCM 10055 / NBRC 100828 / KAW 2/3).